Consider the following 269-residue polypeptide: Zinc transporter ZupT (269 aa).

Helical transmembrane passes span 5 to 25, 38 to 58, 75 to 95, 125 to 145, 158 to 178, 190 to 210, 212 to 232, and 249 to 269; these read VLLA…GSLI, SLAL…EIFV, WMTI…DKFI, MGIF…IATF, IAIA…VPIF, LSFL…LLLM, FLTD…MVFI, and LSMY…VLLV. Fe(2+) is bound by residues asparagine 137 and glutamate 140. Residues glutamate 140 and histidine 165 each contribute to the Zn(2+) site. Residues asparagine 166, glutamate 169, and glutamate 198 each contribute to the Fe(2+) site. Residue glutamate 169 coordinates Zn(2+).

This sequence belongs to the ZIP transporter (TC 2.A.5) family. ZupT subfamily.

The protein localises to the cell membrane. The enzyme catalyses Zn(2+)(in) = Zn(2+)(out). Mediates zinc uptake. May also transport other divalent cations. The sequence is that of Zinc transporter ZupT from Lysinibacillus sphaericus (strain C3-41).